Consider the following 376-residue polypeptide: Secreted LysM effector LysM9 (376 aa).

The signal sequence occupies residues 1–25 (MGHFHLSNFIALIGILLVGPTATSG). The LysM domain maps to 41-89 (SKYVVQAGETCSAIAQAHSITTADIETYNAQSWAWTGCGQISQGDFICL). Residues 190–219 (SSETSSSMTTSTSATTSVPTTTSTTTTTKT) are disordered.

This sequence belongs to the secreted LysM effector family.

It localises to the secreted. Functionally, secreted LysM effector that might have a role in sequestration of chitin oligosaccharides (breakdown products of fungal cell walls that are released during invasion and act as triggers of host immunity) to dampen host defense. This Penicillium expansum (Blue mold rot fungus) protein is Secreted LysM effector LysM9.